The chain runs to 490 residues: Betaine aldehyde dehydrogenase (490 aa).

K(+) is bound by residues T26, I27, and D93. NAD(+) is bound at residue 150–152 (GAW). The active-site Charge relay system is K162. 176-179 (KPSE) lines the NAD(+) pocket. Residue V180 participates in K(+) binding. 230-233 (GVAS) is a binding site for NAD(+). L246 contributes to the K(+) binding site. E252 acts as the Proton acceptor in catalysis. G254, C286, and E387 together coordinate NAD(+). C286 serves as the catalytic Nucleophile. Cysteine sulfenic acid (-SOH) is present on C286. K(+)-binding residues include K457 and G460. E464 serves as the catalytic Charge relay system.

It belongs to the aldehyde dehydrogenase family. Dimer of dimers. The cofactor is K(+).

The catalysed reaction is betaine aldehyde + NAD(+) + H2O = glycine betaine + NADH + 2 H(+). It participates in amine and polyamine biosynthesis; betaine biosynthesis via choline pathway; betaine from betaine aldehyde: step 1/1. In terms of biological role, involved in the biosynthesis of the osmoprotectant glycine betaine. Catalyzes the irreversible oxidation of betaine aldehyde to the corresponding acid. This Klebsiella pneumoniae (strain 342) protein is Betaine aldehyde dehydrogenase.